Consider the following 332-residue polypeptide: Leucine carboxyl methyltransferase 1 (332 aa).

The segment at 1-23 is disordered; sequence MAASLRRPSFTTCSSPTDTDDEG. Residues Arg71, Gly96, Asp120, 169–170, and Glu196 each bind S-adenosyl-L-methionine; that span reads DL.

This sequence belongs to the methyltransferase superfamily. LCMT family.

The catalysed reaction is [phosphatase 2A protein]-C-terminal L-leucine + S-adenosyl-L-methionine = [phosphatase 2A protein]-C-terminal L-leucine methyl ester + S-adenosyl-L-homocysteine. In terms of biological role, methylates the carboxyl group of the C-terminal leucine residue of protein phosphatase 2A catalytic subunits to form alpha-leucine ester residues. In Bos taurus (Bovine), this protein is Leucine carboxyl methyltransferase 1 (LCMT1).